Here is a 632-residue protein sequence, read N- to C-terminus: Gamma-aminobutyric acid receptor subunit theta (632 aa).

A signal peptide spans 1 to 21 (MGIRGMLRAAVILLLIRTWLA). Over 22 to 268 (EGNYPSPIPK…FQVQREVNSY (247 aa)) the chain is Extracellular. Asn127 carries an N-linked (GlcNAc...) asparagine glycan. Residues Cys183 and Cys197 are joined by a disulfide bond. A helical transmembrane segment spans residues 269-289 (LVQVYWPTVLTTITSWISFWM). Residues 290–297 (NYDSSAAR) lie on the Cytoplasmic side of the membrane. A helical membrane pass occupies residues 298-315 (VTIGLTSMLILTTIDSHL). The Extracellular segment spans residues 316 to 326 (RDKLPNISCIK). Residues 327 to 347 (AIDIYILVCLFFVFLSLLEYV) traverse the membrane as a helical segment. Over 348–611 (YINYLFYSRG…DYVPKVDKWS (264 aa)) the chain is Cytoplasmic. 2 disordered regions span residues 410-458 (SPES…STSE) and 491-523 (HGVTHDHEDSNESLSSDERHGHGPSGKPMLHHG). A compositionally biased stretch (polar residues) spans 413–425 (SLGSLTSTSEQAQ). The segment covering 426–439 (LATSESLSPLTSLS) has biased composition (low complexity). Residues 448–458 (ESLSDLPSTSE) are compositionally biased toward polar residues. Over residues 491–511 (HGVTHDHEDSNESLSSDERHG) the composition is skewed to basic and acidic residues. Residues 612–632 (RFLFPLAFGLFNIVYWVYHMY) traverse the membrane as a helical segment.

The protein belongs to the ligand-gated ion channel (TC 1.A.9) family. Gamma-aminobutyric acid receptor (TC 1.A.9.5) subfamily. GABRQ sub-subfamily. As to quaternary structure, heteropentamer, formed by a combination of alpha (GABRA1-6), beta (GABRB1-3), gamma (GABRG1-3), delta (GABRD), epsilon (GABRE), rho (GABRR1-3), pi (GABRP) and theta (GABRQ) chains, each subunit exhibiting distinct physiological and pharmacological properties. As to expression, expressed in brain.

It localises to the postsynaptic cell membrane. The protein resides in the cell membrane. It carries out the reaction chloride(in) = chloride(out). With respect to regulation, potentiated by etomidate, propofol, pregnanolone and pentobarbital. Theta subunit of the heteropentameric ligand-gated chloride channel gated by gamma-aminobutyric acid (GABA), a major inhibitory neurotransmitter in the brain. GABA-gated chloride channels, also named GABA(A) receptors (GABAAR), consist of five subunits arranged around a central pore and contain GABA active binding site(s) located at the alpha and beta subunit interfaces. When activated by GABA, GABAARs selectively allow the flow of chloride anions across the cell membrane down their electrochemical gradient. This chain is Gamma-aminobutyric acid receptor subunit theta, found in Homo sapiens (Human).